The chain runs to 328 residues: tRNA uridine(34) hydroxylase (328 aa).

A Rhodanese domain is found at 130–224 (LDEDTIVLDT…YGKDPEVQGE (95 aa)). Catalysis depends on cysteine 184, which acts as the Cysteine persulfide intermediate.

It belongs to the TrhO family.

The catalysed reaction is uridine(34) in tRNA + AH2 + O2 = 5-hydroxyuridine(34) in tRNA + A + H2O. Its function is as follows. Catalyzes oxygen-dependent 5-hydroxyuridine (ho5U) modification at position 34 in tRNAs. The polypeptide is tRNA uridine(34) hydroxylase (Streptococcus uberis (strain ATCC BAA-854 / 0140J)).